The primary structure comprises 380 residues: E3 ubiquitin-protein ligase RNF13 (380 aa).

A signal peptide spans 1–34 (MLLSIGMLMLSATQVYTILTVQLFAFLNLLPVEA). The Lumenal portion of the chain corresponds to 35-182 (DILAYNFENA…VPEFSLPLEY (148 aa)). Residues 65 to 160 (KGFLINSKPE…GESSANSLKD (96 aa)) enclose the PA domain. A glycan (N-linked (GlcNAc...) asparagine) is linked at Asn-88. The helical transmembrane segment at 183–203 (YLIPFLIIVGICLILIVIFMI) threads the bilayer. The Cytoplasmic portion of the chain corresponds to 204-380 (TKFVQDRHRA…ERDYNIANTV (177 aa)). The segment at 240-282 (CAICLDEYEDGDKLRILPCSHAYHCKCVDPWLTKTKKTCPVCK) adopts an RING-type; atypical zinc-finger fold. The interval 285–380 (VVPSQGDSDS…ERDYNIANTV (96 aa)) is disordered. 2 stretches are compositionally biased toward acidic residues: residues 292-304 (SDSD…EENE) and 339-356 (SDYE…AENE).

In terms of assembly, interacts with ERN1. Autoubiquitinated.

It localises to the endoplasmic reticulum membrane. It is found in the late endosome membrane. The protein resides in the lysosome membrane. Its subcellular location is the nucleus inner membrane. The enzyme catalyses S-ubiquitinyl-[E2 ubiquitin-conjugating enzyme]-L-cysteine + [acceptor protein]-L-lysine = [E2 ubiquitin-conjugating enzyme]-L-cysteine + N(6)-ubiquitinyl-[acceptor protein]-L-lysine.. Its pathway is protein modification; protein ubiquitination. E3 ubiquitin-protein ligase that regulates cell proliferation. Involved in apoptosis regulation. Mediates ER stress-induced activation of JNK signaling pathway and apoptosis by promoting ERN1 activation and splicing of XBP1 mRNA. Also involved in protein trafficking and localization. This Bos taurus (Bovine) protein is E3 ubiquitin-protein ligase RNF13 (RNF13).